A 95-amino-acid polypeptide reads, in one-letter code: Aspartyl/glutamyl-tRNA(Asn/Gln) amidotransferase subunit C (95 aa).

It belongs to the GatC family. In terms of assembly, heterotrimer of A, B and C subunits.

It catalyses the reaction L-glutamyl-tRNA(Gln) + L-glutamine + ATP + H2O = L-glutaminyl-tRNA(Gln) + L-glutamate + ADP + phosphate + H(+). The enzyme catalyses L-aspartyl-tRNA(Asn) + L-glutamine + ATP + H2O = L-asparaginyl-tRNA(Asn) + L-glutamate + ADP + phosphate + 2 H(+). Its function is as follows. Allows the formation of correctly charged Asn-tRNA(Asn) or Gln-tRNA(Gln) through the transamidation of misacylated Asp-tRNA(Asn) or Glu-tRNA(Gln) in organisms which lack either or both of asparaginyl-tRNA or glutaminyl-tRNA synthetases. The reaction takes place in the presence of glutamine and ATP through an activated phospho-Asp-tRNA(Asn) or phospho-Glu-tRNA(Gln). The protein is Aspartyl/glutamyl-tRNA(Asn/Gln) amidotransferase subunit C of Laribacter hongkongensis (strain HLHK9).